Here is a 608-residue protein sequence, read N- to C-terminus: 1-deoxy-D-xylulose-5-phosphate synthase (608 aa).

Thiamine diphosphate contacts are provided by residues histidine 66 and 107–109; that span reads GHA. Aspartate 138 contributes to the Mg(2+) binding site. Thiamine diphosphate-binding positions include 139-140, asparagine 167, phenylalanine 277, and glutamate 350; that span reads GA. Residue asparagine 167 coordinates Mg(2+).

Belongs to the transketolase family. DXPS subfamily. In terms of assembly, homodimer. Requires Mg(2+) as cofactor. Thiamine diphosphate serves as cofactor.

The catalysed reaction is D-glyceraldehyde 3-phosphate + pyruvate + H(+) = 1-deoxy-D-xylulose 5-phosphate + CO2. Its pathway is metabolic intermediate biosynthesis; 1-deoxy-D-xylulose 5-phosphate biosynthesis; 1-deoxy-D-xylulose 5-phosphate from D-glyceraldehyde 3-phosphate and pyruvate: step 1/1. In terms of biological role, catalyzes the acyloin condensation reaction between C atoms 2 and 3 of pyruvate and glyceraldehyde 3-phosphate to yield 1-deoxy-D-xylulose-5-phosphate (DXP). In Thermotoga maritima (strain ATCC 43589 / DSM 3109 / JCM 10099 / NBRC 100826 / MSB8), this protein is 1-deoxy-D-xylulose-5-phosphate synthase.